A 293-amino-acid polypeptide reads, in one-letter code: Fructose-bisphosphate aldolase class 1 (293 aa).

The active-site Proton acceptor is glutamate 176. The Schiff-base intermediate with dihydroxyacetone-P role is filled by lysine 211.

Belongs to the class I fructose-bisphosphate aldolase family.

It catalyses the reaction beta-D-fructose 1,6-bisphosphate = D-glyceraldehyde 3-phosphate + dihydroxyacetone phosphate. It functions in the pathway carbohydrate degradation; glycolysis; D-glyceraldehyde 3-phosphate and glycerone phosphate from D-glucose: step 4/4. This Porphyromonas gingivalis (strain ATCC 33277 / DSM 20709 / CIP 103683 / JCM 12257 / NCTC 11834 / 2561) protein is Fructose-bisphosphate aldolase class 1.